The chain runs to 389 residues: Nuclear receptor subfamily 2 group F member 1-B (389 aa).

The disordered stretch occupies residues 19 to 39 (DDQSAAGREHLQHRHSPKSAE). The segment at residues 51-126 (HVECVVCGDK…VGMRREAVQR (76 aa)) is a DNA-binding region (nuclear receptor). 2 NR C4-type zinc fingers span residues 54–74 (CVVCGDKSSGKHYGQFTCEGC) and 90–109 (CRANRNCPVDQHHRNQCQYC). Residues 152–378 (YLSGYISLLL…TLIRDMLLSG (227 aa)) form the NR LBD domain.

This sequence belongs to the nuclear hormone receptor family. NR2 subfamily. Expressed the retina, where expression is restricted to the outer nuclear layer.

The protein resides in the nucleus. Its function is as follows. Putative transcription factor that is required in photoreceptor cells precursors during eye development. The polypeptide is Nuclear receptor subfamily 2 group F member 1-B (Danio rerio (Zebrafish)).